A 283-amino-acid polypeptide reads, in one-letter code: N-terminal Xaa-Pro-Lys N-methyltransferase 2 (283 aa).

Residues glycine 124, arginine 129, aspartate 146, 174–175, and glutamine 190 contribute to the S-adenosyl-L-methionine site; that span reads LQ.

Belongs to the methyltransferase superfamily. NTM1 family.

Its subcellular location is the nucleus. It catalyses the reaction N-terminal L-alanyl-L-prolyl-L-lysyl-[protein] + S-adenosyl-L-methionine = N-terminal N-methyl-L-alanyl-L-prolyl-L-lysyl-[protein] + S-adenosyl-L-homocysteine + H(+). It carries out the reaction N-terminal L-prolyl-L-prolyl-L-lysyl-[protein] + S-adenosyl-L-methionine = N-terminal N-methyl-L-prolyl-L-prolyl-L-lysyl-[protein] + S-adenosyl-L-homocysteine + H(+). The enzyme catalyses N-terminal L-seryl-L-prolyl-L-lysyl-[protein] + S-adenosyl-L-methionine = N-terminal N-methyl-L-seryl-L-prolyl-L-lysyl-[protein] + S-adenosyl-L-homocysteine + H(+). Functionally, alpha N-methyltransferase that methylates the N-terminus of target proteins containing the N-terminal motif [Ala/Pro/Ser]-Pro-Lys when the initiator Met is cleaved. Specifically catalyzes monomethylation of exposed alpha-amino group of Ala or Ser residue in the [Ala/Ser]-Pro-Lys motif and Pro in the Pro-Pro-Lys motif. Predominantly functions as a mono-methyltransferase but is also able to di-/tri-methylate the GPKRIA peptide and di-methylate the PPKRIA peptide (in vitro). May activate NTMT1 by priming its substrates for trimethylation. This is N-terminal Xaa-Pro-Lys N-methyltransferase 2 (Ntmt2) from Mus musculus (Mouse).